The sequence spans 945 residues: Isoleucine--tRNA ligase (945 aa).

A 'HIGH' region motif is present at residues 66–76 (PYANGDIHLGH). Glu581 lines the L-isoleucyl-5'-AMP pocket. The short motif at 622 to 626 (KMSKS) is the 'KMSKS' region element. Position 625 (Lys625) interacts with ATP. Zn(2+) is bound by residues Cys908, Cys911, Cys928, and Cys931.

This sequence belongs to the class-I aminoacyl-tRNA synthetase family. IleS type 1 subfamily. Monomer. The cofactor is Zn(2+).

It localises to the cytoplasm. It carries out the reaction tRNA(Ile) + L-isoleucine + ATP = L-isoleucyl-tRNA(Ile) + AMP + diphosphate. Catalyzes the attachment of isoleucine to tRNA(Ile). As IleRS can inadvertently accommodate and process structurally similar amino acids such as valine, to avoid such errors it has two additional distinct tRNA(Ile)-dependent editing activities. One activity is designated as 'pretransfer' editing and involves the hydrolysis of activated Val-AMP. The other activity is designated 'posttransfer' editing and involves deacylation of mischarged Val-tRNA(Ile). This Burkholderia ambifaria (strain ATCC BAA-244 / DSM 16087 / CCUG 44356 / LMG 19182 / AMMD) (Burkholderia cepacia (strain AMMD)) protein is Isoleucine--tRNA ligase.